The sequence spans 551 residues: CTP synthase (551 aa).

Residues 1-267 (MSGTKYIFVT…DALVLEKLGL (267 aa)) form an amidoligase domain region. A CTP-binding site is contributed by Ser15. Ser15 provides a ligand contact to UTP. 16–21 (SIGKGT) is an ATP binding site. Tyr56 contacts L-glutamine. An ATP-binding site is contributed by Asp73. The Mg(2+) site is built by Asp73 and Glu141. CTP is bound by residues 148–150 (DIE), 188–193 (KTKPTQ), and Lys224. Residues 188-193 (KTKPTQ) and Lys224 each bind UTP. Positions 292–534 (RVAVIGKYIR…VGACLGAAEE (243 aa)) constitute a Glutamine amidotransferase type-1 domain. Gly355 is an L-glutamine binding site. Residue Cys382 is the Nucleophile; for glutamine hydrolysis of the active site. L-glutamine contacts are provided by residues 383 to 386 (LGMQ), Glu406, and Arg462. Catalysis depends on residues His507 and Glu509.

It belongs to the CTP synthase family. In terms of assembly, homotetramer.

It catalyses the reaction UTP + L-glutamine + ATP + H2O = CTP + L-glutamate + ADP + phosphate + 2 H(+). The enzyme catalyses L-glutamine + H2O = L-glutamate + NH4(+). It carries out the reaction UTP + NH4(+) + ATP = CTP + ADP + phosphate + 2 H(+). It functions in the pathway pyrimidine metabolism; CTP biosynthesis via de novo pathway; CTP from UDP: step 2/2. With respect to regulation, allosterically activated by GTP, when glutamine is the substrate; GTP has no effect on the reaction when ammonia is the substrate. The allosteric effector GTP functions by stabilizing the protein conformation that binds the tetrahedral intermediate(s) formed during glutamine hydrolysis. Inhibited by the product CTP, via allosteric rather than competitive inhibition. Functionally, catalyzes the ATP-dependent amination of UTP to CTP with either L-glutamine or ammonia as the source of nitrogen. Regulates intracellular CTP levels through interactions with the four ribonucleotide triphosphates. This chain is CTP synthase, found in Rubrobacter xylanophilus (strain DSM 9941 / JCM 11954 / NBRC 16129 / PRD-1).